Reading from the N-terminus, the 345-residue chain is Ribonucleoside-diphosphate reductase small chain 2 (345 aa).

At M1 the chain carries N-acetylmethionine. The active site involves Y131. Phosphoserine occurs at positions 169 and 332. T334 carries the post-translational modification Phosphothreonine. At S336 the chain carries Phosphoserine. K337 is covalently cross-linked (Glycyl lysine isopeptide (Lys-Gly) (interchain with G-Cter in ubiquitin)).

It belongs to the ribonucleoside diphosphate reductase small chain family. As to quaternary structure, heterotetramer of two large (R1) and two small (R2) subunits. S.cerevisiae has two different R1 subunits (RNR1 and RNR3) and two different R2 subunits (RNR2 and RNR4). The functional form of the small subunits is a RNR2-RNR4 heterodimer, where RNR2 provides the iron-radical center and RNR4 is required for proper folding of RNR2 and assembly with the large subunits. Under normal growth conditions, the active form of the large subunits is a homodimer of the constitutively expressed RNR1. In damaged cells or cells arrested for DNA synthesis, the reductase consists of multiple species because of the association of the small subunits (RNR2-RNR4) with either the RNR1 homodimer or a heterodimer of RNR1 and the damage-inducible RNR3. Interacts with DIF1.

It is found in the nucleus. The enzyme catalyses a 2'-deoxyribonucleoside 5'-diphosphate + [thioredoxin]-disulfide + H2O = a ribonucleoside 5'-diphosphate + [thioredoxin]-dithiol. Provides the precursors necessary for DNA synthesis. Catalyzes the biosynthesis of deoxyribonucleotides from the corresponding ribonucleotides. RNR4 is required for proper folding of RNR2 and assembly with the large subunits. The sequence is that of Ribonucleoside-diphosphate reductase small chain 2 (RNR4) from Saccharomyces cerevisiae (strain ATCC 204508 / S288c) (Baker's yeast).